The sequence spans 72 residues: uncharacterized protein (72 aa).

A helical transmembrane segment spans residues 23–45; sequence ITNLLITTILLCFFNATTYWKLF.

The protein localises to the membrane. This is an uncharacterized protein from Schizosaccharomyces pombe (strain 972 / ATCC 24843) (Fission yeast).